Here is a 426-residue protein sequence, read N- to C-terminus: MTSSADLTNLKELLSLYKSLRFSDSAAIEKYNSLVEWGTSTYWKIGVQKVANVETSISDYYDEVKNKPFNIDPGYYIFLPVYFGSVFIYSKGKNMVELGSGNSFQIPDDMRSVCNKVLDGDNGIDFLRFVLLNNRWIMEDAISKYQSPVNIFKLASEYGLNIPNYLEIEIEEDTLFDDELYSIIERSFDDNFPKISISYIKLGELRRQVVDFFKFSFMYIESIKVDRIGDNIFIPSVITKSGKKILVKDVDHLIRSKVREHTFVKVKKKNTFSILYDYDGNGTETRGEVIKRIIDTIGRDYYVNGKYFSKVGSAGLKQLTNKLNINECTTVDELVDEINKSGTVKRKIKTQSAFDLSRECLGYPEADFITLVNNMRFKIENCKVVNFNIENTNCLNNPSIETIYGNFNQFVSIFNIVTDVKKRLFE.

The protein belongs to the orthopoxvirus OPG148 family. In terms of assembly, interacts with the DNA polymerase catalytic subunit OPG071. Interacts with UDG/OPG116. Component of the uracil-DNA glycosylase(UDG)-OPG148-polymerase complex; OPG148 and UDG form a heterodimeric processivity factor that associates with OPG071 to form the processive polymerase holoenzyme. Interacts with OPG117.

In terms of biological role, plays an essential role in viral DNA replication by acting as the polymerase processivity factor together with protein OPG116. Serves as a bridge which links the DNA polymerase OPG071 and the uracil DNA glycosylase. This chain is DNA polymerase processivity factor component OPG148 (OPG148), found in Variola virus (isolate Human/India/Ind3/1967) (VARV).